The following is a 599-amino-acid chain: Aspartate--tRNA ligase (599 aa).

Position 180 (glutamate 180) interacts with L-aspartate. The segment at glutamine 204–lysine 207 is aspartate. Arginine 226 serves as a coordination point for L-aspartate. ATP is bound by residues arginine 226 to glutamate 228 and glutamine 235. An L-aspartate-binding site is contributed by histidine 454. Glutamate 488 is an ATP binding site. Arginine 495 contacts L-aspartate. An ATP-binding site is contributed by glycine 540 to arginine 543.

This sequence belongs to the class-II aminoacyl-tRNA synthetase family. Type 1 subfamily. Homodimer.

The protein resides in the cytoplasm. The catalysed reaction is tRNA(Asp) + L-aspartate + ATP = L-aspartyl-tRNA(Asp) + AMP + diphosphate. Catalyzes the attachment of L-aspartate to tRNA(Asp) in a two-step reaction: L-aspartate is first activated by ATP to form Asp-AMP and then transferred to the acceptor end of tRNA(Asp). The polypeptide is Aspartate--tRNA ligase (Clostridium botulinum (strain Alaska E43 / Type E3)).